The chain runs to 225 residues: Uracil-DNA glycosylase (225 aa).

Residue Asp-65 is the Proton acceptor of the active site.

It belongs to the uracil-DNA glycosylase (UDG) superfamily. UNG family.

It is found in the cytoplasm. It catalyses the reaction Hydrolyzes single-stranded DNA or mismatched double-stranded DNA and polynucleotides, releasing free uracil.. Functionally, excises uracil residues from the DNA which can arise as a result of misincorporation of dUMP residues by DNA polymerase or due to deamination of cytosine. This chain is Uracil-DNA glycosylase, found in Anoxybacillus flavithermus (strain DSM 21510 / WK1).